The chain runs to 243 residues: Probable transcriptional regulatory protein LJ_0904 (243 aa).

Residues 1 to 22 (MSGHSKWHNIQGRKNAQDAKRG) form a disordered region.

This sequence belongs to the TACO1 family.

The protein resides in the cytoplasm. This Lactobacillus johnsonii (strain CNCM I-12250 / La1 / NCC 533) protein is Probable transcriptional regulatory protein LJ_0904.